The sequence spans 342 residues: Phosphate acyltransferase (342 aa).

It belongs to the PlsX family. As to quaternary structure, homodimer. Probably interacts with PlsY.

The protein localises to the cytoplasm. It catalyses the reaction a fatty acyl-[ACP] + phosphate = an acyl phosphate + holo-[ACP]. It functions in the pathway lipid metabolism; phospholipid metabolism. Its function is as follows. Catalyzes the reversible formation of acyl-phosphate (acyl-PO(4)) from acyl-[acyl-carrier-protein] (acyl-ACP). This enzyme utilizes acyl-ACP as fatty acyl donor, but not acyl-CoA. The chain is Phosphate acyltransferase from Blochmanniella pennsylvanica (strain BPEN).